A 297-amino-acid polypeptide reads, in one-letter code: Bifonsecin B biosynthesis cluster protein A (297 aa).

A signal peptide spans 1 to 20 (MHFWWTAISAGLLCLPQALG). 7 N-linked (GlcNAc...) asparagine glycosylation sites follow: asparagine 26, asparagine 56, asparagine 75, asparagine 124, asparagine 175, asparagine 210, and asparagine 280.

It belongs to the bfoA family.

In terms of biological role, part of the gene cluster that mediates the biosynthesis of bifonsecin B, a dimeric gamma-naphthopyrone. The first step in the biosynthesis of bifonsecin B is the production of gamma-naphthopyrone precursor YWA1 by the non-reducing polyketide synthase albA, via condensation of one acetyl-CoA starter unit with 6 malonyl-CoA units. YWA1 is then methylated by bfoE at position C-6 to yield foncesin which is further methylated at position C-8 by bfoD to produce fonsecin B. A key enzyme in the biosynthetic pathway is the cytochrome P450 monooxygenase bfoB which catalyzes the oxidative dimerization of fonsecin B to bifonsecin B. Bfob also catalyzes the oxidative dimerization of rubrofusarin B into nigerone. The stereoselectivity of bfoB is influenced by the two natural monomeric substrates; homodimerization of fonsecin B yields a stereochemically pure biaryl, M-foncerine B, while rubrofusarin B yields a mixture of enantiomers M- and P-nigerone. The function of bfoA within the bifonsecin B biosynthesis pathway has not been determined yet. The protein is Bifonsecin B biosynthesis cluster protein A of Aspergillus brasiliensis (strain CBS 101740 / IMI 381727 / IBT 21946).